The primary structure comprises 925 residues: Probable dipeptidyl-aminopeptidase B (925 aa).

Residues 1–104 are disordered; it reads MTPYRDVPPV…RHAQKKGPGM (104 aa). The Cytoplasmic segment spans residues 1–110; the sequence is MTPYRDVPPV…GPGMDRGMRR (110 aa). The segment covering 31–40 has biased composition (low complexity); sequence ESGSSVSTTS. A compositionally biased stretch (basic and acidic residues) spans 55–72; sequence LSEKQPRGDDNEDALKDE. Residues 111 to 131 form a helical; Signal-anchor for type II membrane protein membrane-spanning segment; it reads ALLIAAGLLVSAWVAGLFVYI. Residues 132 to 925 lie on the Vacuolar side of the membrane; that stretch reads ATKSYKPASA…PKPNGKRRAA (794 aa). A glycan (N-linked (GlcNAc...) asparagine) is linked at Asn369. Residue Ser773 is the Charge relay system of the active site. Asn832 is a glycosylation site (N-linked (GlcNAc...) asparagine). Active-site charge relay system residues include Asp850 and His883.

It belongs to the peptidase S9B family.

It localises to the vacuole membrane. It catalyses the reaction Release of an N-terminal dipeptide, Xaa-Yaa-|-Zaa-, from a polypeptide, preferentially when Yaa is Pro, provided Zaa is neither Pro nor hydroxyproline.. Functionally, type IV dipeptidyl-peptidase which removes N-terminal dipeptides sequentially from polypeptides having unsubstituted N-termini provided that the penultimate residue is proline. This Chaetomium globosum (strain ATCC 6205 / CBS 148.51 / DSM 1962 / NBRC 6347 / NRRL 1970) (Soil fungus) protein is Probable dipeptidyl-aminopeptidase B (DAPB).